Consider the following 542-residue polypeptide: CTP synthase (542 aa).

The amidoligase domain stretch occupies residues 1–266 (MATNYIFVTG…DEFVCNRFHL (266 aa)). Ser-14 lines the CTP pocket. Ser-14 provides a ligand contact to UTP. ATP is bound by residues 15 to 20 (SLGKGI) and Asp-72. Mg(2+)-binding residues include Asp-72 and Glu-140. CTP is bound by residues 147–149 (DIE), 187–192 (KTKPTQ), and Lys-223. UTP contacts are provided by residues 187–192 (KTKPTQ) and Lys-223. An ATP-binding site is contributed by 239-241 (KDV). The region spanning 291–542 (TIGMVGKYVE…VKAAKENQKK (252 aa)) is the Glutamine amidotransferase type-1 domain. Gly-352 contacts L-glutamine. Cys-379 functions as the Nucleophile; for glutamine hydrolysis in the catalytic mechanism. L-glutamine is bound by residues 380 to 383 (LGMQ), Glu-403, and Arg-470. Catalysis depends on residues His-515 and Glu-517.

The protein belongs to the CTP synthase family. Homotetramer.

The catalysed reaction is UTP + L-glutamine + ATP + H2O = CTP + L-glutamate + ADP + phosphate + 2 H(+). It carries out the reaction L-glutamine + H2O = L-glutamate + NH4(+). It catalyses the reaction UTP + NH4(+) + ATP = CTP + ADP + phosphate + 2 H(+). The protein operates within pyrimidine metabolism; CTP biosynthesis via de novo pathway; CTP from UDP: step 2/2. Its activity is regulated as follows. Allosterically activated by GTP, when glutamine is the substrate; GTP has no effect on the reaction when ammonia is the substrate. The allosteric effector GTP functions by stabilizing the protein conformation that binds the tetrahedral intermediate(s) formed during glutamine hydrolysis. Inhibited by the product CTP, via allosteric rather than competitive inhibition. In terms of biological role, catalyzes the ATP-dependent amination of UTP to CTP with either L-glutamine or ammonia as the source of nitrogen. Regulates intracellular CTP levels through interactions with the four ribonucleotide triphosphates. The polypeptide is CTP synthase (Actinobacillus succinogenes (strain ATCC 55618 / DSM 22257 / CCUG 43843 / 130Z)).